A 151-amino-acid polypeptide reads, in one-letter code: Small ribosomal subunit protein uS15 (151 aa).

The protein belongs to the universal ribosomal protein uS15 family.

This is Small ribosomal subunit protein uS15 (RPS13) from Pisum sativum (Garden pea).